A 307-amino-acid polypeptide reads, in one-letter code: MTARKDSDWRDMLPRVQGRMSFDAPMAPFTWFRVGGNAEALFRPADLDDLIAVLEVLPPQVPVTVVGVGSNLLVRDGGVPGMVIRLAGPFATIDVMGDTITAGAGALDLTVARTAEEAGLAGLEFLSGVPGTIGGALRMNAGAFGAEMKDVTVSAQALDRAGNLQILGPEELGFSYRRSAVPEGWIFLSASLKGRPGKPADIGARMAEIARVREESQPVKVRTGGSTFANPEGHSAWKLIDAAGCRGLVMGGAQVSEKHCNFLLNTGDATAADIEDLGEEVRRRVLETSGIDLHWEIRRIGIRRDAS.

Residues 34 to 197 (VGGNAEALFR…LSASLKGRPG (164 aa)) enclose the FAD-binding PCMH-type domain. The active site involves Arg-177. Ser-226 serves as the catalytic Proton donor. Residue Glu-296 is part of the active site.

The protein belongs to the MurB family. FAD serves as cofactor.

The protein resides in the cytoplasm. The enzyme catalyses UDP-N-acetyl-alpha-D-muramate + NADP(+) = UDP-N-acetyl-3-O-(1-carboxyvinyl)-alpha-D-glucosamine + NADPH + H(+). The protein operates within cell wall biogenesis; peptidoglycan biosynthesis. Functionally, cell wall formation. This Paramagnetospirillum magneticum (strain ATCC 700264 / AMB-1) (Magnetospirillum magneticum) protein is UDP-N-acetylenolpyruvoylglucosamine reductase.